The chain runs to 31 residues: Photosystem II reaction center protein T (31 aa).

The helical transmembrane segment at 3 to 23 threads the bilayer; sequence ALVYTFLLISTLGIIFFGIFF.

Belongs to the PsbT family. PSII is composed of 1 copy each of membrane proteins PsbA, PsbB, PsbC, PsbD, PsbE, PsbF, PsbH, PsbI, PsbJ, PsbK, PsbL, PsbM, PsbT, PsbY, PsbZ, Psb30/Ycf12, at least 3 peripheral proteins of the oxygen-evolving complex and a large number of cofactors. It forms dimeric complexes.

It is found in the plastid. Its subcellular location is the chloroplast thylakoid membrane. Found at the monomer-monomer interface of the photosystem II (PS II) dimer, plays a role in assembly and dimerization of PSII. PSII is a light-driven water plastoquinone oxidoreductase, using light energy to abstract electrons from H(2)O, generating a proton gradient subsequently used for ATP formation. The chain is Photosystem II reaction center protein T from Nephroselmis olivacea (Green alga).